A 39-amino-acid polypeptide reads, in one-letter code: Photosystem II reaction center protein L (39 aa).

The helical transmembrane segment at 18–38 threads the bilayer; sequence SLYLGLLLTFVMGILFSSYFF.

The protein belongs to the PsbL family. In terms of assembly, PSII is composed of 1 copy each of membrane proteins PsbA, PsbB, PsbC, PsbD, PsbE, PsbF, PsbH, PsbI, PsbJ, PsbK, PsbL, PsbM, PsbT, PsbX, PsbY, Psb30/Ycf12, peripheral proteins PsbO, CyanoQ (PsbQ), PsbU, PsbV and a large number of cofactors. It forms dimeric complexes.

It is found in the cellular thylakoid membrane. One of the components of the core complex of photosystem II (PSII). PSII is a light-driven water:plastoquinone oxidoreductase that uses light energy to abstract electrons from H(2)O, generating O(2) and a proton gradient subsequently used for ATP formation. It consists of a core antenna complex that captures photons, and an electron transfer chain that converts photonic excitation into a charge separation. This subunit is found at the monomer-monomer interface and is required for correct PSII assembly and/or dimerization. The protein is Photosystem II reaction center protein L of Prochlorococcus marinus (strain MIT 9211).